The following is an 81-amino-acid chain: Beta-defensin 34 (81 aa).

The first 20 residues, Met-1 to His-20, serve as a signal peptide directing secretion. Disulfide bonds link Cys-28/Cys-55, Cys-35/Cys-49, and Cys-39/Cys-56. Residues Cys-62 to Glu-72 are compositionally biased toward polar residues. Residues Cys-62–Gly-81 are disordered.

It belongs to the beta-defensin family. In terms of tissue distribution, only expressed in epididymis (caput, corpus and cauda).

The protein resides in the secreted. In terms of biological role, has antibacterial activity. This is Beta-defensin 34 (Defb34) from Mus musculus (Mouse).